The chain runs to 184 residues: Ribosome-recycling factor (184 aa).

Belongs to the RRF family.

The protein localises to the cytoplasm. In terms of biological role, responsible for the release of ribosomes from messenger RNA at the termination of protein biosynthesis. May increase the efficiency of translation by recycling ribosomes from one round of translation to another. The sequence is that of Ribosome-recycling factor from Cutibacterium acnes (strain DSM 16379 / KPA171202) (Propionibacterium acnes).